The primary structure comprises 91 residues: Cell division protein CrgA (91 aa).

A compositionally biased stretch (polar residues) spans 1-24; it reads MPKSKITTEGSALPQSSSSATNRT. The tract at residues 1 to 28 is disordered; it reads MPKSKITTEGSALPQSSSSATNRTPVKI. The next 2 membrane-spanning stretches (helical) occupy residues 38 to 58 and 68 to 88; these read IAIM…NYLA and LGPW…LMTM.

The protein belongs to the CrgA family.

The protein localises to the cell membrane. In terms of biological role, involved in cell division. The polypeptide is Cell division protein CrgA (Corynebacterium aurimucosum (strain ATCC 700975 / DSM 44827 / CIP 107346 / CN-1) (Corynebacterium nigricans)).